Consider the following 732-residue polypeptide: 1,4-alpha-glucan branching enzyme GlgB (732 aa).

Asp-409 (nucleophile) is an active-site residue. Glu-462 (proton donor) is an active-site residue.

It belongs to the glycosyl hydrolase 13 family. GlgB subfamily. Monomer.

It catalyses the reaction Transfers a segment of a (1-&gt;4)-alpha-D-glucan chain to a primary hydroxy group in a similar glucan chain.. Its pathway is glycan biosynthesis; glycogen biosynthesis. Catalyzes the formation of the alpha-1,6-glucosidic linkages in glycogen by scission of a 1,4-alpha-linked oligosaccharide from growing alpha-1,4-glucan chains and the subsequent attachment of the oligosaccharide to the alpha-1,6 position. This is 1,4-alpha-glucan branching enzyme GlgB from Corynebacterium diphtheriae (strain ATCC 700971 / NCTC 13129 / Biotype gravis).